Reading from the N-terminus, the 124-residue chain is Fluoride-specific ion channel FluC (124 aa).

4 consecutive transmembrane segments (helical) span residues valine 3 to leucine 23, isoleucine 34 to isoleucine 54, leucine 68 to phenylalanine 88, and alanine 100 to isoleucine 120. Na(+)-binding residues include glycine 75 and threonine 78.

This sequence belongs to the fluoride channel Fluc/FEX (TC 1.A.43) family.

It is found in the cell inner membrane. The catalysed reaction is fluoride(in) = fluoride(out). Na(+) is not transported, but it plays an essential structural role and its presence is essential for fluoride channel function. Functionally, fluoride-specific ion channel. Important for reducing fluoride concentration in the cell, thus reducing its toxicity. This chain is Fluoride-specific ion channel FluC, found in Coxiella burnetii (strain Dugway 5J108-111).